A 612-amino-acid chain; its full sequence is Sulfite reductase [NADPH] flavoprotein alpha-component (612 aa).

In terms of domain architecture, Flavodoxin-like spans 64–202; the sequence is VTLISASQTG…QAQQWRQQVV (139 aa). FMN contacts are provided by residues 70 to 75, 117 to 120, and 153 to 162; these read SQTGNA, STQG, and LGDTSYEHFC. In terms of domain architecture, FAD-binding FR-type spans 247–461; it reads TAPLTAQLSV…IEHNDNFRLP (215 aa). FAD contacts are provided by residues threonine 335, lysine 369, 399–402, 417–419, tyrosine 423, and 432–435; these read RLYS, TVG, and GGAS. Residues 532 to 533, 538 to 542, and aspartate 574 contribute to the NADP(+) site; these read SR and KIYVQ. FAD is bound at residue tyrosine 612.

The protein belongs to the NADPH-dependent sulphite reductase flavoprotein subunit CysJ family. It in the N-terminal section; belongs to the flavodoxin family. This sequence in the C-terminal section; belongs to the flavoprotein pyridine nucleotide cytochrome reductase family. Alpha(8)-beta(8). The alpha component is a flavoprotein, the beta component is a hemoprotein. FAD is required as a cofactor. The cofactor is FMN.

It catalyses the reaction hydrogen sulfide + 3 NADP(+) + 3 H2O = sulfite + 3 NADPH + 4 H(+). It functions in the pathway sulfur metabolism; hydrogen sulfide biosynthesis; hydrogen sulfide from sulfite (NADPH route): step 1/1. Its function is as follows. Component of the sulfite reductase complex that catalyzes the 6-electron reduction of sulfite to sulfide. This is one of several activities required for the biosynthesis of L-cysteine from sulfate. The flavoprotein component catalyzes the electron flow from NADPH -&gt; FAD -&gt; FMN to the hemoprotein component. This Yersinia pestis bv. Antiqua (strain Nepal516) protein is Sulfite reductase [NADPH] flavoprotein alpha-component.